The primary structure comprises 444 residues: ATP-dependent protease ATPase subunit HslU (444 aa).

ATP-binding positions include Ile-20, 62-67 (GVGKTE), Asp-257, Glu-322, and Arg-394.

This sequence belongs to the ClpX chaperone family. HslU subfamily. A double ring-shaped homohexamer of HslV is capped on each side by a ring-shaped HslU homohexamer. The assembly of the HslU/HslV complex is dependent on binding of ATP.

Its subcellular location is the cytoplasm. In terms of biological role, ATPase subunit of a proteasome-like degradation complex; this subunit has chaperone activity. The binding of ATP and its subsequent hydrolysis by HslU are essential for unfolding of protein substrates subsequently hydrolyzed by HslV. HslU recognizes the N-terminal part of its protein substrates and unfolds these before they are guided to HslV for hydrolysis. The polypeptide is ATP-dependent protease ATPase subunit HslU (Bordetella avium (strain 197N)).